Consider the following 982-residue polypeptide: Little elongation complex subunit 2 (982 aa).

A phosphoserine mark is found at Ser-17 and Ser-326. The segment covering 410-427 (TTKVSKSPSPASTSTVPN) has biased composition (polar residues). 2 disordered regions span residues 410–450 (TTKV…PDIS) and 473–504 (GMDG…PLIQ). A compositionally biased stretch (basic and acidic residues) spans 479-497 (EECKNKDDQGFESCEKVSN). Position 571 is a phosphoserine (Ser-571). A Phosphothreonine modification is found at Thr-573. 3 disordered regions span residues 595–623 (VGSN…NTAC), 672–697 (ENSK…KSGW), and 930–982 (PKSL…RKIT). Over residues 597–610 (SNLSSRPASPNSSS) the composition is skewed to low complexity. Composition is skewed to polar residues over residues 611-623 (GQAS…NTAC) and 672-683 (ENSKQPSVSEQL). Residues 684-697 (SGPSDSSSWPKSGW) are compositionally biased toward low complexity. Over residues 956–970 (SMETKSSCLPAQQVE) the composition is skewed to polar residues.

It belongs to the ICE2 family. As to quaternary structure, component of the little elongation complex (LEC), at least composed of ELL (ELL, ELL2 or ELL3), ZC3H8, ICE1 and ICE2. Interacts with ICE1 (via C-terminus domain). Interacts with ELL. Expressed at low levels in lung and testis.

It is found in the nucleus. Component of the little elongation complex (LEC), a complex required to regulate small nuclear RNA (snRNA) gene transcription by RNA polymerase II and III. This chain is Little elongation complex subunit 2 (ICE2), found in Homo sapiens (Human).